Reading from the N-terminus, the 344-residue chain is Dihydroorotase (344 aa).

Zn(2+)-binding residues include His-13 and His-15. Substrate is bound by residues His-15–Arg-17 and Asn-41. Zn(2+) is bound by residues Lys-98, His-135, and His-173. Residue Lys-98 is modified to N6-carboxylysine. Position 135 (His-135) interacts with substrate. Leu-218 contacts substrate. Asp-247 provides a ligand contact to Zn(2+). Asp-247 is an active-site residue. 2 residues coordinate substrate: His-251 and Ala-263.

Belongs to the metallo-dependent hydrolases superfamily. DHOase family. Class II DHOase subfamily. Homodimer. Requires Zn(2+) as cofactor.

It catalyses the reaction (S)-dihydroorotate + H2O = N-carbamoyl-L-aspartate + H(+). The protein operates within pyrimidine metabolism; UMP biosynthesis via de novo pathway; (S)-dihydroorotate from bicarbonate: step 3/3. Its function is as follows. Catalyzes the reversible cyclization of carbamoyl aspartate to dihydroorotate. The chain is Dihydroorotase from Neisseria meningitidis serogroup B (strain ATCC BAA-335 / MC58).